Consider the following 86-residue polypeptide: Small ribosomal subunit protein bS20 (86 aa).

Basic residues predominate over residues 1–27; that stretch reads MANIKSAKKRAVQSEKRRQHNASRRSM. The tract at residues 1–28 is disordered; sequence MANIKSAKKRAVQSEKRRQHNASRRSMM.

It belongs to the bacterial ribosomal protein bS20 family.

In terms of biological role, binds directly to 16S ribosomal RNA. The protein is Small ribosomal subunit protein bS20 of Proteus mirabilis (strain HI4320).